Here is a 149-residue protein sequence, read N- to C-terminus: Prefoldin subunit alpha (149 aa).

Belongs to the prefoldin alpha subunit family. As to quaternary structure, heterohexamer of two alpha and four beta subunits.

It localises to the cytoplasm. In terms of biological role, molecular chaperone capable of stabilizing a range of proteins. Seems to fulfill an ATP-independent, HSP70-like function in archaeal de novo protein folding. This is Prefoldin subunit alpha from Methanoculleus marisnigri (strain ATCC 35101 / DSM 1498 / JR1).